The chain runs to 603 residues: Aspartate--tRNA(Asp/Asn) ligase (603 aa).

The interval glutamine 205–lysine 208 is aspartate. An L-aspartate-binding site is contributed by arginine 227. ATP is bound by residues arginine 227–glutamate 229 and glutamine 236. L-aspartate is bound at residue histidine 463. Glutamate 497 lines the ATP pocket. Residue arginine 504 coordinates L-aspartate. Position 549-552 (glycine 549–arginine 552) interacts with ATP.

This sequence belongs to the class-II aminoacyl-tRNA synthetase family. Type 1 subfamily. In terms of assembly, homodimer.

The protein resides in the cytoplasm. The catalysed reaction is tRNA(Asx) + L-aspartate + ATP = L-aspartyl-tRNA(Asx) + AMP + diphosphate. In terms of biological role, aspartyl-tRNA synthetase with relaxed tRNA specificity since it is able to aspartylate not only its cognate tRNA(Asp) but also tRNA(Asn). Reaction proceeds in two steps: L-aspartate is first activated by ATP to form Asp-AMP and then transferred to the acceptor end of tRNA(Asp/Asn). The chain is Aspartate--tRNA(Asp/Asn) ligase from Anaeromyxobacter dehalogenans (strain 2CP-1 / ATCC BAA-258).